We begin with the raw amino-acid sequence, 780 residues long: Aconitate hydratase, mitochondrial (780 aa).

The transit peptide at 1–27 (MAPYSLLVTRLQKALGVRQYHVASVLC) directs the protein to the mitochondrion. Position 31 is an N6-succinyllysine (Lys-31). Lys-50 bears the N6-acetyllysine; alternate mark. Position 50 is an N6-succinyllysine; alternate (Lys-50). Gln-99 contributes to the substrate binding site. An N6-acetyllysine; alternate mark is found at Lys-138 and Lys-144. 2 positions are modified to N6-succinyllysine; alternate: Lys-138 and Lys-144. 192–194 (DSH) contributes to the substrate binding site. Lys-233 is subject to N6-acetyllysine; alternate. The residue at position 233 (Lys-233) is an N6-succinyllysine; alternate. Cys-385 serves as a coordination point for [4Fe-4S] cluster. An N6-succinyllysine modification is found at Lys-411. The [4Fe-4S] cluster site is built by Cys-448 and Cys-451. Substrate contacts are provided by Arg-474 and Arg-479. The segment covering 528–537 (DADELPKGEF) has biased composition (basic and acidic residues). The interval 528–560 (DADELPKGEFDPGQDTYQHPPKDSSGQHVDVSP) is disordered. An N6-succinyllysine modification is found at Lys-549. Polar residues predominate over residues 551–560 (SSGQHVDVSP). A Phosphoserine modification is found at Ser-559. Residue Lys-573 is modified to N6-acetyllysine; alternate. Lys-573 is modified (N6-succinyllysine; alternate). 2 positions are modified to N6-succinyllysine: Lys-577 and Lys-591. N6-acetyllysine; alternate is present on Lys-605. The residue at position 605 (Lys-605) is an N6-succinyllysine; alternate. Arg-607 contacts substrate. Lys-628 carries the N6-succinyllysine modification. Ser-670 is modified (phosphoserine). 670–671 (SR) serves as a coordination point for substrate. Lys-689 carries the post-translational modification N6-succinyllysine. An N6-acetyllysine; alternate mark is found at Lys-723 and Lys-730. N6-succinyllysine; alternate occurs at positions 723 and 730. Residues Lys-736, Lys-739, and Lys-743 each carry the N6-acetyllysine modification.

It belongs to the aconitase/IPM isomerase family. As to quaternary structure, monomer. Requires [4Fe-4S] cluster as cofactor. Post-translationally, forms covalent cross-links mediated by transglutaminase TGM2, between a glutamine and the epsilon-amino group of a lysine residue, forming homopolymers and heteropolymers.

Its subcellular location is the mitochondrion. The catalysed reaction is citrate = D-threo-isocitrate. It participates in carbohydrate metabolism; tricarboxylic acid cycle; isocitrate from oxaloacetate: step 2/2. Catalyzes the isomerization of citrate to isocitrate via cis-aconitate. This chain is Aconitate hydratase, mitochondrial (ACO2), found in Homo sapiens (Human).